Here is a 285-residue protein sequence, read N- to C-terminus: Polyamine aminopropyltransferase (285 aa).

The PABS domain occupies 5-241 (DTWFTEHFQT…GWWSVTLSSK (237 aa)). Gln-35 contributes to the S-methyl-5'-thioadenosine binding site. 2 residues coordinate spermidine: His-66 and Asp-90. S-methyl-5'-thioadenosine-binding positions include Asp-110 and 141–142 (DG). Residue Asp-160 is the Proton acceptor of the active site. 160 to 163 (DSTD) contributes to the spermidine binding site. Residue Pro-167 participates in S-methyl-5'-thioadenosine binding.

The protein belongs to the spermidine/spermine synthase family. In terms of assembly, homodimer or homotetramer.

The protein localises to the cytoplasm. The catalysed reaction is S-adenosyl 3-(methylsulfanyl)propylamine + putrescine = S-methyl-5'-thioadenosine + spermidine + H(+). It participates in amine and polyamine biosynthesis; spermidine biosynthesis; spermidine from putrescine: step 1/1. Catalyzes the irreversible transfer of a propylamine group from the amino donor S-adenosylmethioninamine (decarboxy-AdoMet) to putrescine (1,4-diaminobutane) to yield spermidine. The protein is Polyamine aminopropyltransferase of Xylella fastidiosa (strain Temecula1 / ATCC 700964).